Here is a 345-residue protein sequence, read N- to C-terminus: MNPIINFILLSSMIAGTVLTMTSHHWVSAWLGLELNTLAIIPIISKTHHPRATEASTKYFLIQAASSALMLFAGIINAHLYGTWDITQISNNPTKILLTAALATKLGLAPIHFWLPEILQGVPMLTALIITTWQKIAPMALLITTWNTIPTPMTLTMGFLSVIIGGLGGLNQTQLRKMMAFSSIAHLGWMIVIITITPSLTLFNLVLYITFTSSTMLIMHLTMSKTLQNAMLMSSHSSTTANLFLLSLLSLGGLPPLSGFSPKWLILQELITHNLVPLATTMAITTLFSLMFYLRTTYISAMTLPPSTTPIKNIWRLKPNSSTTMLSMFSLATLFLLPITPTMTQ.

Transmembrane regions (helical) follow at residues 1–21 (MNPIINFILLSSMIAGTVLTM), 60–80 (FLIQAASSALMLFAGIINAHL), 110–130 (PIHFWLPEILQGVPMLTALII), 149–169 (IPTPMTLTMGFLSVIIGGLGG), 179–196 (MAFSSIAHLGWMIVIITI), 200–222 (LTLFNLVLYITFTSSTMLIMHLT), 240–260 (TANLFLLSLLSLGGLPPLSGF), 274–294 (NLVPLATTMAITTLFSLMFYL), and 323–343 (TTMLSMFSLATLFLLPITPTM).

This sequence belongs to the complex I subunit 2 family.

The protein localises to the mitochondrion inner membrane. It carries out the reaction a ubiquinone + NADH + 5 H(+)(in) = a ubiquinol + NAD(+) + 4 H(+)(out). Its function is as follows. Core subunit of the mitochondrial membrane respiratory chain NADH dehydrogenase (Complex I) that is believed to belong to the minimal assembly required for catalysis. Complex I functions in the transfer of electrons from NADH to the respiratory chain. The immediate electron acceptor for the enzyme is believed to be ubiquinone. This Varanus melinus (Quince monitor lizard) protein is NADH-ubiquinone oxidoreductase chain 2 (MT-ND2).